The chain runs to 264 residues: tRNA pseudouridine synthase A (264 aa).

The active-site Nucleophile is Asp-51. Residue Tyr-109 participates in substrate binding.

The protein belongs to the tRNA pseudouridine synthase TruA family. As to quaternary structure, homodimer.

It catalyses the reaction uridine(38/39/40) in tRNA = pseudouridine(38/39/40) in tRNA. In terms of biological role, formation of pseudouridine at positions 38, 39 and 40 in the anticodon stem and loop of transfer RNAs. This chain is tRNA pseudouridine synthase A, found in Polaromonas naphthalenivorans (strain CJ2).